The sequence spans 548 residues: Chaperonin GroEL (548 aa).

Residues 30–33 (TLGP), Lys51, 87–91 (DGTTT), Gly415, 479–481 (NAA), and Asp495 contribute to the ATP site.

It belongs to the chaperonin (HSP60) family. In terms of assembly, forms a cylinder of 14 subunits composed of two heptameric rings stacked back-to-back. Interacts with the co-chaperonin GroES.

It is found in the cytoplasm. The catalysed reaction is ATP + H2O + a folded polypeptide = ADP + phosphate + an unfolded polypeptide.. Its function is as follows. Together with its co-chaperonin GroES, plays an essential role in assisting protein folding. The GroEL-GroES system forms a nano-cage that allows encapsulation of the non-native substrate proteins and provides a physical environment optimized to promote and accelerate protein folding. This chain is Chaperonin GroEL, found in Ectopseudomonas mendocina (strain ymp) (Pseudomonas mendocina).